The primary structure comprises 255 residues: Homeobox protein Hox-D4 (255 aa).

The interval 31–128 (EQGADYYGGG…KQPPPGTALK (98 aa)) is disordered. Residues 94-109 (EPCPAPPAPPPAPLPG) show a composition bias toward pro residues. The short motif at 133 to 138 (VYPWMK) is the Antp-type hexapeptide element. A DNA-binding region (homeobox) is located at residues 154 to 213 (PKRSRTAYTRQQVLELEKEFHFNRYLTRRRRIEIAHTLCLSERQIKIWFQNRRMKWKKDH). Positions 212–255 (DHKLPNTKGRSSSSSSSSSCSSSVAPSQHLQPMAKDHHTDLTTL) are disordered. Positions 222–234 (SSSSSSSSSCSSS) are enriched in low complexity. The span at 245 to 255 (AKDHHTDLTTL) shows a compositional bias: basic and acidic residues.

It belongs to the Antp homeobox family. Deformed subfamily. Forms a DNA-binding heterodimer with transcription factor PBX1.

The protein resides in the nucleus. Sequence-specific transcription factor which is part of a developmental regulatory system that provides cells with specific positional identities on the anterior-posterior axis. The chain is Homeobox protein Hox-D4 (HOXD4) from Gorilla gorilla gorilla (Western lowland gorilla).